The primary structure comprises 153 residues: MMTPRQRRMTWVALMVAGVSLAAFFALTAFQKNLLYFYTPSQVASGEAPKGYPFRIGGLVVKDSVKREPDSLTVRFEVSDGPNAVPVLYTGILPDLFREGQGIIAVGQIDDGGTFQATEVLAKHDENYMPPEVAESLKKNGGLPADYSEYRKK.

At 1–8 (MMTPRQRR) the chain is on the cytoplasmic side. Residues 9–29 (MTWVALMVAGVSLAAFFALTA) traverse the membrane as a helical; Signal-anchor for type II membrane protein segment. Residues 30–153 (FQKNLLYFYT…PADYSEYRKK (124 aa)) lie on the Periplasmic side of the membrane. Residues His124 and Tyr128 each contribute to the heme site. Residues 134 to 153 (AESLKKNGGLPADYSEYRKK) form a disordered region.

Belongs to the CcmE/CycJ family.

It is found in the cell inner membrane. In terms of biological role, heme chaperone required for the biogenesis of c-type cytochromes. Transiently binds heme delivered by CcmC and transfers the heme to apo-cytochromes in a process facilitated by CcmF and CcmH. The chain is Cytochrome c-type biogenesis protein CcmE from Methylococcus capsulatus (strain ATCC 33009 / NCIMB 11132 / Bath).